The following is a 251-amino-acid chain: ATP synthase subunit a (251 aa).

The next 5 helical transmembrane spans lie at 34 to 54, 93 to 113, 130 to 150, 195 to 215, and 216 to 236; these read VFLT…AASS, FVGT…LVPF, INTT…AGFS, LVVG…VMAL, and GLFT…AYIG.

This sequence belongs to the ATPase A chain family. In terms of assembly, F-type ATPases have 2 components, CF(1) - the catalytic core - and CF(0) - the membrane proton channel. CF(1) has five subunits: alpha(3), beta(3), gamma(1), delta(1), epsilon(1). CF(0) has four main subunits: a, b, b' and c.

Its subcellular location is the cellular thylakoid membrane. Functionally, key component of the proton channel; it plays a direct role in the translocation of protons across the membrane. This chain is ATP synthase subunit a, found in Nostoc sp. (strain PCC 7120 / SAG 25.82 / UTEX 2576).